The primary structure comprises 339 residues: MRVYYDRDADLNLIKGKKVVIVGYGSQGHAHALNLKDSGVKDVAIALRKGSASAKKAEGAGFKVMEVAEAAKWADLVMMLTPDELQGDIYREHLHDNMKQGAALVFAHGLNVHFNLLDPRADLDVLMIAPKGPGHTVRSEYQRGGGVPCLIAIAKDSSGNAHDLGLSYASAIGGGRAGIIETTFKEECETDLFGEQAVLCGGLVELIKAGYETLTEAGYAPEMAYFECLHEVKLIVDLIYEGGIANMNYSISNTAEYGEYVTGPRIITPETKAEMKRVLDDIQSGRFARDWMLENKVNQSSFKATRARLSQHPIEEVGARLRDMMPWIKKGALVDKSKN.

The KARI N-terminal Rossmann domain maps to 1 to 182 (MRVYYDRDAD…GGGRAGIIET (182 aa)). NADP(+)-binding positions include 24-27 (YGSQ), Arg-48, Ser-51, Ser-53, and 83-86 (DELQ). Residue His-108 is part of the active site. An NADP(+)-binding site is contributed by Gly-134. The KARI C-terminal knotted domain occupies 183–328 (TFKEECETDL…ARLRDMMPWI (146 aa)). 4 residues coordinate Mg(2+): Asp-191, Glu-195, Glu-227, and Glu-231. A substrate-binding site is contributed by Ser-252.

Belongs to the ketol-acid reductoisomerase family. The cofactor is Mg(2+).

The enzyme catalyses (2R)-2,3-dihydroxy-3-methylbutanoate + NADP(+) = (2S)-2-acetolactate + NADPH + H(+). It carries out the reaction (2R,3R)-2,3-dihydroxy-3-methylpentanoate + NADP(+) = (S)-2-ethyl-2-hydroxy-3-oxobutanoate + NADPH + H(+). It functions in the pathway amino-acid biosynthesis; L-isoleucine biosynthesis; L-isoleucine from 2-oxobutanoate: step 2/4. It participates in amino-acid biosynthesis; L-valine biosynthesis; L-valine from pyruvate: step 2/4. In terms of biological role, involved in the biosynthesis of branched-chain amino acids (BCAA). Catalyzes an alkyl-migration followed by a ketol-acid reduction of (S)-2-acetolactate (S2AL) to yield (R)-2,3-dihydroxy-isovalerate. In the isomerase reaction, S2AL is rearranged via a Mg-dependent methyl migration to produce 3-hydroxy-3-methyl-2-ketobutyrate (HMKB). In the reductase reaction, this 2-ketoacid undergoes a metal-dependent reduction by NADPH to yield (R)-2,3-dihydroxy-isovalerate. The chain is Ketol-acid reductoisomerase (NADP(+)) from Bradyrhizobium sp. (strain ORS 278).